A 245-amino-acid chain; its full sequence is 4-hydroxy-tetrahydrodipicolinate reductase (245 aa).

Residues 7–12, 75–77, and 102–105 each bind NAD(+); these read GAKGKV, GTT, and APNF. Histidine 132 functions as the Proton donor/acceptor in the catalytic mechanism. Histidine 133 contacts (S)-2,3,4,5-tetrahydrodipicolinate. Lysine 136 serves as the catalytic Proton donor. 142 to 143 provides a ligand contact to (S)-2,3,4,5-tetrahydrodipicolinate; the sequence is GT.

This sequence belongs to the DapB family.

The protein localises to the cytoplasm. It catalyses the reaction (S)-2,3,4,5-tetrahydrodipicolinate + NAD(+) + H2O = (2S,4S)-4-hydroxy-2,3,4,5-tetrahydrodipicolinate + NADH + H(+). The enzyme catalyses (S)-2,3,4,5-tetrahydrodipicolinate + NADP(+) + H2O = (2S,4S)-4-hydroxy-2,3,4,5-tetrahydrodipicolinate + NADPH + H(+). Its pathway is amino-acid biosynthesis; L-lysine biosynthesis via DAP pathway; (S)-tetrahydrodipicolinate from L-aspartate: step 4/4. Functionally, catalyzes the conversion of 4-hydroxy-tetrahydrodipicolinate (HTPA) to tetrahydrodipicolinate. The sequence is that of 4-hydroxy-tetrahydrodipicolinate reductase from Mycobacterium ulcerans (strain Agy99).